The chain runs to 40 residues: Beta-defensin 2 (40 aa).

Intrachain disulfides connect Cys-7/Cys-36, Cys-14/Cys-29, and Cys-19/Cys-37.

This sequence belongs to the beta-defensin family. Neutrophilic granules.

The protein resides in the secreted. Has bactericidal activity. Active against E.coli ML35 and S.aureus 502A. This Bos taurus (Bovine) protein is Beta-defensin 2 (DEFB2).